The chain runs to 765 residues: Multifunctional tryptophan biosynthesis protein (765 aa).

The Glutamine amidotransferase type-1 domain occupies 2 to 196 (ATLLIDNYDS…LSLRGGNWDE (195 aa)). 53 to 55 (GPG) serves as a coordination point for L-glutamine. Catalysis depends on Cys81, which acts as the Nucleophile; for GATase activity. Residues Gln85 and 131 to 132 (SL) each bind L-glutamine. Catalysis depends on for GATase activity residues His170 and Glu172. Residues 231 to 494 (TILSRIYAQR…NLKEFVAELL (264 aa)) form an indole-3-glycerol phosphate synthase region. The N-(5'-phosphoribosyl)anthranilate isomerase stretch occupies residues 512-765 (QVKICGISSV…VEKAKSINLQ (254 aa)).

It catalyses the reaction N-(5-phospho-beta-D-ribosyl)anthranilate = 1-(2-carboxyphenylamino)-1-deoxy-D-ribulose 5-phosphate. It carries out the reaction 1-(2-carboxyphenylamino)-1-deoxy-D-ribulose 5-phosphate + H(+) = (1S,2R)-1-C-(indol-3-yl)glycerol 3-phosphate + CO2 + H2O. The enzyme catalyses chorismate + L-glutamine = anthranilate + pyruvate + L-glutamate + H(+). Its pathway is amino-acid biosynthesis; L-tryptophan biosynthesis; L-tryptophan from chorismate: step 1/5. The protein operates within amino-acid biosynthesis; L-tryptophan biosynthesis; L-tryptophan from chorismate: step 3/5. It participates in amino-acid biosynthesis; L-tryptophan biosynthesis; L-tryptophan from chorismate: step 4/5. Its function is as follows. Trifunctional enzyme bearing the Gln amidotransferase (GATase) domain of anthranilate synthase, indole-glycerolphosphate synthase, and phosphoribosylanthranilate isomerase activities. The protein is Multifunctional tryptophan biosynthesis protein (trp1) of Phycomyces blakesleeanus.